The following is a 223-amino-acid chain: UPF0441 protein YgiB (223 aa).

The span at 178 to 195 shows a compositional bias: low complexity; it reads TVPKTAMAPKPATTTTVT. Positions 178-223 are disordered; that stretch reads TVPKTAMAPKPATTTTVTRGGFGESVAKQSTMQRSATGTSSRSMGG. The segment covering 204–223 has biased composition (polar residues); that stretch reads AKQSTMQRSATGTSSRSMGG.

This sequence belongs to the UPF0441 family.

This chain is UPF0441 protein YgiB, found in Shigella dysenteriae serotype 1 (strain Sd197).